The following is a 230-amino-acid chain: Endonuclease NucS (230 aa).

This sequence belongs to the NucS endonuclease family.

It is found in the cytoplasm. Cleaves both 3' and 5' ssDNA extremities of branched DNA structures. In Corynebacterium glutamicum (strain ATCC 13032 / DSM 20300 / JCM 1318 / BCRC 11384 / CCUG 27702 / LMG 3730 / NBRC 12168 / NCIMB 10025 / NRRL B-2784 / 534), this protein is Endonuclease NucS.